Reading from the N-terminus, the 515-residue chain is Probable cytosol aminopeptidase (515 aa).

The Mn(2+) site is built by K277 and D282. The active site involves K289. Mn(2+) is bound by residues D300, D359, and E361. The active site involves R363.

Belongs to the peptidase M17 family. Mn(2+) serves as cofactor.

It is found in the cytoplasm. The catalysed reaction is Release of an N-terminal amino acid, Xaa-|-Yaa-, in which Xaa is preferably Leu, but may be other amino acids including Pro although not Arg or Lys, and Yaa may be Pro. Amino acid amides and methyl esters are also readily hydrolyzed, but rates on arylamides are exceedingly low.. It carries out the reaction Release of an N-terminal amino acid, preferentially leucine, but not glutamic or aspartic acids.. In terms of biological role, presumably involved in the processing and regular turnover of intracellular proteins. Catalyzes the removal of unsubstituted N-terminal amino acids from various peptides. The sequence is that of Probable cytosol aminopeptidase from Streptomyces griseus subsp. griseus (strain JCM 4626 / CBS 651.72 / NBRC 13350 / KCC S-0626 / ISP 5235).